A 148-amino-acid chain; its full sequence is 3-dehydroquinate dehydratase (148 aa).

The Proton acceptor role is filled by Tyr-24. Residues Asn-75, His-81, and Asp-88 each contribute to the substrate site. The active-site Proton donor is His-101. Substrate-binding positions include 102-103 (LS) and Arg-112.

The protein belongs to the type-II 3-dehydroquinase family. In terms of assembly, homododecamer.

It carries out the reaction 3-dehydroquinate = 3-dehydroshikimate + H2O. It functions in the pathway metabolic intermediate biosynthesis; chorismate biosynthesis; chorismate from D-erythrose 4-phosphate and phosphoenolpyruvate: step 3/7. Catalyzes a trans-dehydration via an enolate intermediate. The chain is 3-dehydroquinate dehydratase from Bartonella henselae (strain ATCC 49882 / DSM 28221 / CCUG 30454 / Houston 1) (Rochalimaea henselae).